A 221-amino-acid polypeptide reads, in one-letter code: Carbonic anhydrase (221 aa).

Residues Cys-38, Asp-40, His-99, and Cys-102 each contribute to the Zn(2+) site.

The protein belongs to the beta-class carbonic anhydrase family. Zn(2+) serves as cofactor.

The enzyme catalyses hydrogencarbonate + H(+) = CO2 + H2O. The polypeptide is Carbonic anhydrase (cynT) (Helicobacter pylori (strain ATCC 700392 / 26695) (Campylobacter pylori)).